The following is a 671-amino-acid chain: Probable serine/threonine-protein kinase DDB_G0286627 (671 aa).

The region spanning 31–283 (WVIERQLSKG…SHQLIKHPFF (253 aa)) is the Protein kinase domain. Residues 37-45 (LSKGSFGQV) and Lys61 each bind ATP. Asp148 (proton acceptor) is an active-site residue. The helical transmembrane segment at 369 to 389 (FKIIYLFLILLFLMTILVNLN) threads the bilayer. The disordered stretch occupies residues 410–523 (PESNPIKKPS…PPVTETPKPT (114 aa)). Over residues 427–490 (NQYSEGSQSS…PTDSSTTDPP (64 aa)) the composition is skewed to low complexity. The segment covering 491–513 (VTDPPITDPPITDPPVTDPPITE) has biased composition (pro residues).

The protein belongs to the protein kinase superfamily. STE Ser/Thr protein kinase family. The cofactor is Mg(2+).

It is found in the membrane. It carries out the reaction L-seryl-[protein] + ATP = O-phospho-L-seryl-[protein] + ADP + H(+). It catalyses the reaction L-threonyl-[protein] + ATP = O-phospho-L-threonyl-[protein] + ADP + H(+). The polypeptide is Probable serine/threonine-protein kinase DDB_G0286627 (Dictyostelium discoideum (Social amoeba)).